The following is a 279-amino-acid chain: Oxygen-dependent coproporphyrinogen-III oxidase (279 aa).

S102 provides a ligand contact to substrate. Residues H106 and H116 each coordinate a divalent metal cation. H116 serves as the catalytic Proton donor. 118-120 (NTR) contacts substrate. A divalent metal cation is bound by residues H149 and H179. The interval 244-279 (YVEFNLLYDRGTKFGLMTDGNVEAILMSLPPVVKFN) is important for dimerization.

Belongs to the aerobic coproporphyrinogen-III oxidase family. Homodimer. The cofactor is a divalent metal cation.

The protein resides in the cytoplasm. It catalyses the reaction coproporphyrinogen III + O2 + 2 H(+) = protoporphyrinogen IX + 2 CO2 + 2 H2O. It functions in the pathway porphyrin-containing compound metabolism; protoporphyrin-IX biosynthesis; protoporphyrinogen-IX from coproporphyrinogen-III (O2 route): step 1/1. Its function is as follows. Involved in the heme biosynthesis. Catalyzes the aerobic oxidative decarboxylation of propionate groups of rings A and B of coproporphyrinogen-III to yield the vinyl groups in protoporphyrinogen-IX. The protein is Oxygen-dependent coproporphyrinogen-III oxidase of Rickettsia prowazekii (strain Madrid E).